Consider the following 351-residue polypeptide: MFDLLGLRLLHYITFRTAYATIFAFLLALIFGPFIILRLKKLKLDQILREDGPKRHLSEKMGIPTMGGILIFFCVLVSLFFWINLWNVYFLIVLFVMISFACLGFMDDLLKIKRKNADGLNPRFKIYGQILFSCISVTMLYYFGGEHISIIYFPFFKSLKLDLGVLYIPFGMFILISASNSFNLTDGLDGLAIGLSIVVTGALVIIAYLTSRVDFATYLNIPNIKGSEELVIFLGALLGGSFGFLWFNAYPAKIMMGDTGSLSIGAVLGMTALILKSEILFAILAGVFVLETLSVIIQVAVYKKTKKRVFKMAPLHHHFEELGWSETQVVIRFWIIGLIFAIIALSTLKIR.

Transmembrane regions (helical) follow at residues 17-37, 63-83, 85-105, 135-155, 158-178, 190-210, 230-250, 254-274, 279-299, and 328-348; these read TAYATIFAFLLALIFGPFIIL, IPTMGGILIFFCVLVSLFFWI, LWNVYFLIVLFVMISFACLGF, ISVTMLYYFGGEHISIIYFPF, SLKLDLGVLYIPFGMFILISA, GLAIGLSIVVTGALVIIAYLT, LVIFLGALLGGSFGFLWFNAY, IMMGDTGSLSIGAVLGMTALI, ILFAILAGVFVLETLSVIIQV, and QVVIRFWIIGLIFAIIALSTL.

It belongs to the glycosyltransferase 4 family. MraY subfamily. The cofactor is Mg(2+).

It localises to the cell inner membrane. The enzyme catalyses UDP-N-acetyl-alpha-D-muramoyl-L-alanyl-gamma-D-glutamyl-meso-2,6-diaminopimeloyl-D-alanyl-D-alanine + di-trans,octa-cis-undecaprenyl phosphate = di-trans,octa-cis-undecaprenyl diphospho-N-acetyl-alpha-D-muramoyl-L-alanyl-D-glutamyl-meso-2,6-diaminopimeloyl-D-alanyl-D-alanine + UMP. It participates in cell wall biogenesis; peptidoglycan biosynthesis. In terms of biological role, catalyzes the initial step of the lipid cycle reactions in the biosynthesis of the cell wall peptidoglycan: transfers peptidoglycan precursor phospho-MurNAc-pentapeptide from UDP-MurNAc-pentapeptide onto the lipid carrier undecaprenyl phosphate, yielding undecaprenyl-pyrophosphoryl-MurNAc-pentapeptide, known as lipid I. The polypeptide is Phospho-N-acetylmuramoyl-pentapeptide-transferase (Borrelia hermsii (strain HS1 / DAH)).